The following is a 144-amino-acid chain: Large ribosomal subunit protein uL15 (144 aa).

Positions 1-58 (MRLNTLSPAAGSKPSKKRVGRGIGSGLGKTGGRGHKGQKSRSGGSVRPGFEGGQMPLK) are disordered. Residues 21-31 (RGIGSGLGKTG) are compositionally biased toward gly residues.

Belongs to the universal ribosomal protein uL15 family. In terms of assembly, part of the 50S ribosomal subunit.

In terms of biological role, binds to the 23S rRNA. This is Large ribosomal subunit protein uL15 from Vibrio atlanticus (strain LGP32) (Vibrio splendidus (strain Mel32)).